The primary structure comprises 141 residues: Small ribosomal subunit protein uS12 (141 aa).

Belongs to the universal ribosomal protein uS12 family. Part of the 30S ribosomal subunit.

In terms of biological role, with S4 and S5 plays an important role in translational accuracy. Located at the interface of the 30S and 50S subunits. This chain is Small ribosomal subunit protein uS12, found in Methanobrevibacter smithii (strain ATCC 35061 / DSM 861 / OCM 144 / PS).